The primary structure comprises 693 residues: Polyribonucleotide nucleotidyltransferase (693 aa).

Residues D490 and D496 each contribute to the Mg(2+) site. The region spanning 557–617 (PRISWFFIDP…EKVQEAVEYI (61 aa)) is the KH domain. An S1 motif domain is found at 627–691 (GDLYTGKVTR…DAGRLQFRRL (65 aa)).

The protein belongs to the polyribonucleotide nucleotidyltransferase family. Requires Mg(2+) as cofactor.

It is found in the cytoplasm. It carries out the reaction RNA(n+1) + phosphate = RNA(n) + a ribonucleoside 5'-diphosphate. Its function is as follows. Involved in mRNA degradation. Catalyzes the phosphorolysis of single-stranded polyribonucleotides processively in the 3'- to 5'-direction. The sequence is that of Polyribonucleotide nucleotidyltransferase from Fervidobacterium nodosum (strain ATCC 35602 / DSM 5306 / Rt17-B1).